A 195-amino-acid chain; its full sequence is HTH-type transcriptional regulator BetI (195 aa).

The HTH tetR-type domain maps to 8–68; it reads EIRRAQLIDA…ATMRHVLRDL (61 aa). A DNA-binding region (H-T-H motif) is located at residues 31–50; that stretch reads TLASVAQRANISTGIVSHYF.

It participates in amine and polyamine biosynthesis; betaine biosynthesis via choline pathway [regulation]. Repressor involved in the biosynthesis of the osmoprotectant glycine betaine. It represses transcription of the choline transporter BetT and the genes of BetAB involved in the synthesis of glycine betaine. This Burkholderia thailandensis (strain ATCC 700388 / DSM 13276 / CCUG 48851 / CIP 106301 / E264) protein is HTH-type transcriptional regulator BetI.